The sequence spans 369 residues: Protein FAM187B (369 aa).

Residues methionine 1 to glycine 17 form the signal peptide. Over phenylalanine 18–glycine 333 the chain is Extracellular. N-linked (GlcNAc...) asparagine glycosylation is found at asparagine 45, asparagine 68, and asparagine 130. The helical transmembrane segment at leucine 334 to isoleucine 354 threads the bilayer. The Cytoplasmic portion of the chain corresponds to arginine 355–lysine 369.

The protein belongs to the FAM187 family.

The protein resides in the membrane. In Macaca fascicularis (Crab-eating macaque), this protein is Protein FAM187B (FAM187B).